The primary structure comprises 176 residues: RNA polymerase sigma factor SigO (176 aa).

The Polymerase core binding signature appears at 30–43; sequence DARSLDELFKQFYK. The segment at residues 139–158 is a DNA-binding region (H-T-H motif); the sequence is MQEIADSLGESRQNISNIHK.

It belongs to the sigma-70 factor family. Interacts with RNA polymerase.

Its function is as follows. Sigma factors are initiation factors that promote the attachment of RNA polymerase to specific initiation sites and are then released. Together with its coactivator RsoA, positively regulates the expression of at least three operons, including oxdC-yvrL, sigO-rsoA and yvrJ. Required for the acid stress-dependent induction of the oxalate decarboxylase oxdC. The chain is RNA polymerase sigma factor SigO (sigO) from Bacillus subtilis (strain 168).